Consider the following 569-residue polypeptide: Dihydroxy-acid dehydratase (569 aa).

Position 61 (cysteine 61) interacts with [2Fe-2S] cluster. Position 93 (aspartate 93) interacts with Mg(2+). A [2Fe-2S] cluster-binding site is contributed by cysteine 134. Positions 135 and 136 each coordinate Mg(2+). An N6-carboxylysine modification is found at lysine 136. Position 211 (cysteine 211) interacts with [2Fe-2S] cluster. Mg(2+) is bound at residue glutamate 462. The Proton acceptor role is filled by serine 488.

It belongs to the IlvD/Edd family. As to quaternary structure, homodimer. The cofactor is [2Fe-2S] cluster. Mg(2+) is required as a cofactor.

It catalyses the reaction (2R)-2,3-dihydroxy-3-methylbutanoate = 3-methyl-2-oxobutanoate + H2O. The enzyme catalyses (2R,3R)-2,3-dihydroxy-3-methylpentanoate = (S)-3-methyl-2-oxopentanoate + H2O. It participates in amino-acid biosynthesis; L-isoleucine biosynthesis; L-isoleucine from 2-oxobutanoate: step 3/4. Its pathway is amino-acid biosynthesis; L-valine biosynthesis; L-valine from pyruvate: step 3/4. Functions in the biosynthesis of branched-chain amino acids. Catalyzes the dehydration of (2R,3R)-2,3-dihydroxy-3-methylpentanoate (2,3-dihydroxy-3-methylvalerate) into 2-oxo-3-methylpentanoate (2-oxo-3-methylvalerate) and of (2R)-2,3-dihydroxy-3-methylbutanoate (2,3-dihydroxyisovalerate) into 2-oxo-3-methylbutanoate (2-oxoisovalerate), the penultimate precursor to L-isoleucine and L-valine, respectively. The chain is Dihydroxy-acid dehydratase from Tropheryma whipplei (strain Twist) (Whipple's bacillus).